A 1573-amino-acid chain; its full sequence is Synaptojanin-1 (1573 aa).

The 324-residue stretch at 119–442 (VRKVLNSGNF…GDSISKIYAG (324 aa)) folds into the SAC domain. Residues 500–899 (GSLRVSEQTL…GPPDGTVLVS (400 aa)) form a catalytic region. Ser-820 and Ser-830 each carry phosphoserine. In terms of domain architecture, RRM spans 902–971 (SSLPENNFFD…RTITIALKSP (70 aa)). Residues 1029–1054 (HLQPSSSSGLGTSPSSSPRTSPCQSP) are compositionally biased toward low complexity. Disordered stretches follow at residues 1029–1322 (HLQP…PLKI), 1341–1360 (SVQTSPVPTPDPKRLIQLPS), 1370–1463 (VSCM…GFKD), and 1535–1573 (SRRPPPPPVPLLPPGTSPPVDPFTTLASKASPTLDFTER). At Ser-1053 the chain carries Phosphoserine. Pro residues predominate over residues 1108–1130 (PPPPRPVAPPTRPAPPQRPPPPS). Phosphoserine is present on residues Ser-1150 and Ser-1178. Position 1201 is an omega-N-methylarginine (Arg-1201). At Thr-1220 the chain carries Phosphothreonine. Residues 1221–1234 (PESQSKTSETSKGS) are compositionally biased toward polar residues. The residue at position 1292 (Ser-1292) is a Phosphoserine. The segment covering 1293 to 1304 (SHSLPSEASSQP) has biased composition (low complexity). Residues 1313-1322 (DGKRESPLKI) are compositionally biased toward basic and acidic residues. 2 positions are modified to phosphoserine: Ser-1318 and Ser-1345. Thr-1349 bears the Phosphothreonine mark. Over residues 1382–1407 (RSQSQENMRSSPNPFITGLTRTNPFS) the composition is skewed to polar residues. A run of 3 repeats spans residues 1396–1398 (FIT), 1406–1408 (FSD), and 1417–1419 (FRA). The 3 X 3 AA repeats of N-P-F stretch occupies residues 1396 to 1419 (FITGLTRTNPFSDRTAAPGNPFRA). Pro residues predominate over residues 1536-1555 (RRPPPPPVPLLPPGTSPPVD). Phosphoserine occurs at positions 1551 and 1565.

It belongs to the synaptojanin family. The protein in the central section; belongs to the inositol 1,4,5-trisphosphate 5-phosphatase family. Interacts with ASH/GRB2. Interacts with PACSIN1, PACSIN2 and PACSIN3. Interacts with AMPH, SH3GL1, SH3GL2 and SH3GL3. Interacts with MYO1E (via SH3 domain). Interacts with BIN1 and DNM1. Interacts with EPS15.

The protein localises to the cytoplasm. The protein resides in the perinuclear region. The catalysed reaction is a 1,2-diacyl-sn-glycero-3-phospho-(1D-myo-inositol-4,5-bisphosphate) + H2O = a 1,2-diacyl-sn-glycero-3-phospho-(1D-myo-inositol 4-phosphate) + phosphate. Its function is as follows. Phosphatase that acts on various phosphoinositides, including phosphatidylinositol 4-phosphate, phosphatidylinositol (4,5)-bisphosphate and phosphatidylinositol (3,4,5)-trisphosphate. Has a role in clathrin-mediated endocytosis. Hydrolyzes PIP2 bound to actin regulatory proteins resulting in the rearrangement of actin filaments downstream of tyrosine kinase and ASH/GRB2. This Homo sapiens (Human) protein is Synaptojanin-1 (SYNJ1).